Consider the following 258-residue polypeptide: Snake venom serine proteinase 5 (258 aa).

The first 18 residues, 1–18, serve as a signal peptide directing secretion; sequence MVLIRVLANLLILQLSYA. Positions 19–24 are excised as a propeptide; that stretch reads QKSSEL. The Peptidase S1 domain maps to 25-249; sequence VVGGDECNIN…YNDWIQSIIA (225 aa). Cystine bridges form between C31/C163, C50/C66, C98/C256, C142/C210, C174/C189, and C200/C225. An N-linked (GlcNAc...) asparagine glycan is attached at N44. Active-site charge relay system residues include H65 and D110. The active-site Charge relay system is S204.

Belongs to the peptidase S1 family. Snake venom subfamily. As to quaternary structure, monomer. As to expression, expressed by the venom gland.

Its subcellular location is the secreted. In terms of biological role, snake venom serine protease that may act in the hemostasis system of the prey. The protein is Snake venom serine proteinase 5 of Crotalus adamanteus (Eastern diamondback rattlesnake).